The sequence spans 533 residues: Probable protein kinase UbiB (533 aa).

A helical membrane pass occupies residues 24–44; it reads LILELPMLPWWLRLLGAALPW. The region spanning 126-494 is the Protein kinase domain; sequence RFEREPLASA…WKSSRHDWLG (369 aa). Residues 132 to 140 and K154 contribute to the ATP site; that span reads LASASVAQV. Residue D289 is the Proton acceptor of the active site. The chain crosses the membrane as a helical span at residues 510–530; the sequence is LGQQLEAWPAWVMLAGGVFLI.

The protein belongs to the ABC1 family. UbiB subfamily.

Its subcellular location is the cell inner membrane. Its pathway is cofactor biosynthesis; ubiquinone biosynthesis [regulation]. Its function is as follows. Is probably a protein kinase regulator of UbiI activity which is involved in aerobic coenzyme Q (ubiquinone) biosynthesis. This is Probable protein kinase UbiB from Pseudomonas paraeruginosa (strain DSM 24068 / PA7) (Pseudomonas aeruginosa (strain PA7)).